A 284-amino-acid chain; its full sequence is Phosphatidylglycerol--prolipoprotein diacylglyceryl transferase (284 aa).

The next 7 helical transmembrane spans lie at 19-39 (ISFY…MWFL), 60-80 (LLYL…VLFY), 98-118 (GGMS…WFSY), 130-150 (FIVP…FING), 199-219 (QLYE…IFSC), 225-245 (GSIS…IEFF), and 258-278 (FITL…IIMY). Arg143 provides a ligand contact to a 1,2-diacyl-sn-glycero-3-phospho-(1'-sn-glycerol).

This sequence belongs to the Lgt family.

The protein resides in the cell inner membrane. It catalyses the reaction L-cysteinyl-[prolipoprotein] + a 1,2-diacyl-sn-glycero-3-phospho-(1'-sn-glycerol) = an S-1,2-diacyl-sn-glyceryl-L-cysteinyl-[prolipoprotein] + sn-glycerol 1-phosphate + H(+). It functions in the pathway protein modification; lipoprotein biosynthesis (diacylglyceryl transfer). Catalyzes the transfer of the diacylglyceryl group from phosphatidylglycerol to the sulfhydryl group of the N-terminal cysteine of a prolipoprotein, the first step in the formation of mature lipoproteins. The polypeptide is Phosphatidylglycerol--prolipoprotein diacylglyceryl transferase (Blochmanniella floridana).